A 64-amino-acid polypeptide reads, in one-letter code: Large ribosomal subunit protein uL30 (64 aa).

Belongs to the universal ribosomal protein uL30 family. As to quaternary structure, part of the 50S ribosomal subunit.

This is Large ribosomal subunit protein uL30 from Rhodopseudomonas palustris (strain BisA53).